Consider the following 262-residue polypeptide: MSRIHPTAIIESGAQLDESVEIGPYAIVGANVTIGARTTIGSHSVIEGHTTIGEDNRIGHYASVGGRPQDMKYRDEPTKLVIGSRNTIREFTTIHTGTVQDKGITTLGDDNWIMAYVHIGHDCQIGSNVILSSNAQMAGHVIVGDHAIVGGMSGVHQFVRIGAHSMLGGASALVQDIPPFVIAAGNKAEPHGINVEGLRRRGFSADAISALRSAYRLLYKNGLSLEDAKVQLRELAAAGGDGDEPVRALVDFVEQSQRGIIR.

This sequence belongs to the transferase hexapeptide repeat family. LpxA subfamily. Homotrimer.

It localises to the cytoplasm. It carries out the reaction a (3R)-hydroxyacyl-[ACP] + UDP-N-acetyl-alpha-D-glucosamine = a UDP-3-O-[(3R)-3-hydroxyacyl]-N-acetyl-alpha-D-glucosamine + holo-[ACP]. It functions in the pathway glycolipid biosynthesis; lipid IV(A) biosynthesis; lipid IV(A) from (3R)-3-hydroxytetradecanoyl-[acyl-carrier-protein] and UDP-N-acetyl-alpha-D-glucosamine: step 1/6. Functionally, involved in the biosynthesis of lipid A, a phosphorylated glycolipid that anchors the lipopolysaccharide to the outer membrane of the cell. The protein is Acyl-[acyl-carrier-protein]--UDP-N-acetylglucosamine O-acyltransferase of Paraburkholderia phymatum (strain DSM 17167 / CIP 108236 / LMG 21445 / STM815) (Burkholderia phymatum).